A 414-amino-acid polypeptide reads, in one-letter code: Putative F-box/kelch-repeat protein At1g20940 (414 aa).

The 53-residue stretch at 13 to 65 (SSIINDLPLDLLDEILFRLEPKSMAMMRCTNNSIKSYLSDPRFGPEYPSWVRP) folds into the F-box domain. Kelch repeat units lie at residues 281–328 (LTLI…MYDG) and 331–378 (LVVR…KLTP).

As to quaternary structure, interacts with DEK3.

The protein operates within protein modification; protein ubiquitination. Probable component of an E3 ubiquitin ligase complex. In Arabidopsis thaliana (Mouse-ear cress), this protein is Putative F-box/kelch-repeat protein At1g20940.